Here is a 641-residue protein sequence, read N- to C-terminus: Serine/threonine-protein kinase PK-1 (641 aa).

The 263-residue stretch at 18-280 (YRVDARIAVG…ARARDARARL (263 aa)) folds into the Protein kinase domain. ATP contacts are provided by residues 24–32 (IAVGGMATV) and Lys-47. The active-site Proton acceptor is the Asp-141. A disordered region spans residues 317–347 (LPVNEEDEGADAAHRTSRFRSPPPLPPRGRT). PASTA domains are found at residues 375–441 (SGQF…TLSK), 442–508 (GPRT…LTVS), 509–576 (KGAP…TLSK), and 577–641 (GPEM…IEIR). The interval 469 to 494 (KPGMSTREFSDSVPAGSVISTEPGKG) is disordered.

The protein belongs to the protein kinase superfamily. Ser/Thr protein kinase family. Post-translationally, autophosphorylated on threonine residue(s).

It carries out the reaction L-seryl-[protein] + ATP = O-phospho-L-seryl-[protein] + ADP + H(+). The enzyme catalyses L-threonyl-[protein] + ATP = O-phospho-L-threonyl-[protein] + ADP + H(+). The protein is Serine/threonine-protein kinase PK-1 (spk1) of Streptomyces toyocaensis.